The primary structure comprises 191 residues: Ion-translocating oxidoreductase complex subunit B (191 aa).

The tract at residues 1–26 (MSSLWIAIAAVSAIALVSGLILGFAA) is hydrophobic. A 4Fe-4S domain is found at 32–90 (EADPIVERIDALLPQSQCGQCGYPGCRPYAEAVANGEKINRCAPGGEAVMRNIAALLAV). The [4Fe-4S] cluster site is built by Cys49, Cys52, Cys57, Cys73, Cys116, Cys119, Cys122, Cys126, Cys146, Cys149, Cys152, and Cys156. 4Fe-4S ferredoxin-type domains lie at 107–136 (QVAL…GATR) and 137–166 (ALHT…LVPV).

The protein belongs to the 4Fe4S bacterial-type ferredoxin family. RnfB subfamily. The complex is composed of six subunits: RnfA, RnfB, RnfC, RnfD, RnfE and RnfG. [4Fe-4S] cluster is required as a cofactor.

It localises to the cell inner membrane. Its function is as follows. Part of a membrane-bound complex that couples electron transfer with translocation of ions across the membrane. This chain is Ion-translocating oxidoreductase complex subunit B, found in Edwardsiella ictaluri (strain 93-146).